The primary structure comprises 184 residues: NADH-quinone oxidoreductase subunit J (184 aa).

Residues 1-21 (MEFAFYICGLIAILATLRVIT) form a helical membrane-spanning segment. At 22-27 (HTNPVH) the chain is on the cytoplasmic side. A helical transmembrane segment spans residues 28–48 (ALLYLIISLLAISGVFFSLGA). The Periplasmic segment spans residues 49–53 (YFAGA). A helical membrane pass occupies residues 54-74 (LEIIVYAGAIMVLFVFVVMML). At 75–91 (NLGGSEIEQERQWLKPQ) the chain is on the cytoplasmic side. The chain crosses the membrane as a helical span at residues 92–112 (VWIGPAILSAIMLVVIVYAIL). Over 113–137 (GVNDQGIDGTPISAKAVGITLFGPY) the chain is Periplasmic. The chain crosses the membrane as a helical span at residues 138-158 (VLAVELASMLLLAGLVVAFHV). Topologically, residues 159–184 (GREERAGEVLSNRKDDSAKRKTEEHA) are cytoplasmic.

The protein belongs to the complex I subunit 6 family. As to quaternary structure, composed of 13 different subunits. Subunits NuoA, H, J, K, L, M, N constitute the membrane sector of the complex.

It localises to the cell inner membrane. It catalyses the reaction a quinone + NADH + 5 H(+)(in) = a quinol + NAD(+) + 4 H(+)(out). Its function is as follows. NDH-1 shuttles electrons from NADH, via FMN and iron-sulfur (Fe-S) centers, to quinones in the respiratory chain. The immediate electron acceptor for the enzyme in this species is believed to be ubiquinone. Couples the redox reaction to proton translocation (for every two electrons transferred, four hydrogen ions are translocated across the cytoplasmic membrane), and thus conserves the redox energy in a proton gradient. The sequence is that of NADH-quinone oxidoreductase subunit J (nuoJ) from Escherichia coli O157:H7.